We begin with the raw amino-acid sequence, 509 residues long: Maturase K (509 aa).

This sequence belongs to the intron maturase 2 family. MatK subfamily.

It localises to the plastid. The protein resides in the chloroplast. Usually encoded in the trnK tRNA gene intron. Probably assists in splicing its own and other chloroplast group II introns. The sequence is that of Maturase K from Stylosanthes hamata (Caribbean stylo).